The chain runs to 159 residues: Succinate dehydrogenase [ubiquinone] cytochrome b small subunit, mitochondrial (159 aa).

The N-terminal 56 residues, 1 to 56 (MAVLWRLSAVCGAQGGRALLLRTPVVRPAHISAFLQDRPIPEWCGVQHIHLSPGHH), are a transit peptide targeting the mitochondrion. The Mitochondrial matrix segment spans residues 57–63 (SGSKAAS). The helical transmembrane segment at 64-85 (LHWTSERVVSVLLLGLLPAAYL) threads the bilayer. The Mitochondrial intermembrane segment spans residues 86–90 (NPCSA). A helical transmembrane segment spans residues 91–111 (MDYSLAATLTLHGHWGLGQVV). His102 is a binding site for heme b. At 112-120 (TDYVHGDAS) the chain is on the mitochondrial matrix side. Residue Tyr114 participates in a ubiquinone binding. Residues 121–142 (QKAAKAGLLALSALTFAGLCYF) traverse the membrane as a helical segment. Topologically, residues 143–159 (NYHDVGICKAVAMLWKL) are mitochondrial intermembrane.

It belongs to the CybS family. In terms of assembly, component of complex II composed of four subunits: the flavoprotein (FP) SDHA, iron-sulfur protein (IP) SDHB, and a cytochrome b560 composed of SDHC and SDHD.

It is found in the mitochondrion inner membrane. The protein operates within carbohydrate metabolism; tricarboxylic acid cycle. Functionally, membrane-anchoring subunit of succinate dehydrogenase (SDH) that is involved in complex II of the mitochondrial electron transport chain and is responsible for transferring electrons from succinate to ubiquinone (coenzyme Q). SDH also oxidizes malate to the non-canonical enol form of oxaloacetate, enol-oxaloacetate. Enol-oxaloacetate, which is a potent inhibitor of the succinate dehydrogenase activity, is further isomerized into keto-oxaloacetate. The protein is Succinate dehydrogenase [ubiquinone] cytochrome b small subunit, mitochondrial (SDHD) of Pongo abelii (Sumatran orangutan).